The following is a 121-amino-acid chain: uncharacterized protein (121 aa).

Transmembrane regions (helical) follow at residues 26–46 (FIALFDFPLLFIYFPFLILVL) and 72–92 (AFLTHEECGLVLQYIYYWLGL).

It localises to the membrane. This is an uncharacterized protein from Saccharomyces cerevisiae (strain ATCC 204508 / S288c) (Baker's yeast).